The following is a 161-amino-acid chain: UPF0178 protein BOV_1904 (161 aa).

This sequence belongs to the UPF0178 family.

The protein is UPF0178 protein BOV_1904 of Brucella ovis (strain ATCC 25840 / 63/290 / NCTC 10512).